A 413-amino-acid chain; its full sequence is MKALSSSSPILGASQPATATALIARSGRSEWQSSCAILTSKVISQEESESLPVPPVSGGVDHLNGHNSAAARVPGMNLVPIEKSDSNPLVPQHRHNPLKPLSMTDLSPAPMHGSNLRVAYQGVPGAYSEAAAGKAYPNCQAIPCDQFEVAFQAVELWIADRAVLPVENSLGGSIHRNYDLLLRHRLHIVGEVQLPVHHCLLALPGVRKEFLTRVISHPQGLAQCEHTLTKLGLNVAREAVDDTAGAAEFIASNNLRDTAAIASARAAEIYGLEILEDGIQDDVSNVTRFVMLAREPIIPRTDRPFKTSIVFAHEKGTSVLFKVLSAFAFRDISLTKIESRPNHNRPIRVVDDANVGTAKHFEYMFYVDFEASMAEARAQNALAEVQEFTSFLRVLGSYPMDMTPWSPTSSTSS.

The transit peptide at 1–44 (MKALSSSSPILGASQPATATALIARSGRSEWQSSCAILTSKVIS) directs the protein to the chloroplast. One can recognise a Prephenate dehydratase domain in the interval 117–294 (RVAYQGVPGA…NVTRFVMLAR (178 aa)). Positions 308-399 (SIVFAHEKGT…SFLRVLGSYP (92 aa)) constitute an ACT domain.

As to expression, expressed in roots, leaves, stems, flowers and siliques.

Its subcellular location is the plastid. The protein localises to the chloroplast stroma. The catalysed reaction is L-arogenate + H(+) = L-phenylalanine + CO2 + H2O. It catalyses the reaction prephenate + H(+) = 3-phenylpyruvate + CO2 + H2O. Its pathway is amino-acid biosynthesis; L-phenylalanine biosynthesis; L-phenylalanine from L-arogenate: step 1/1. The protein operates within amino-acid biosynthesis; L-phenylalanine biosynthesis; phenylpyruvate from prephenate: step 1/1. Functionally, converts the prephenate produced from the shikimate-chorismate pathway into phenylalanine. Dehydratase that uses arogenate and prephenate as substrates. Utilzes more efficiently arogenate than prephenate. The polypeptide is Arogenate dehydratase/prephenate dehydratase 6, chloroplastic (Arabidopsis thaliana (Mouse-ear cress)).